The primary structure comprises 376 residues: Probable ribonucleoside-diphosphate reductase small subunit 048L (376 aa).

Fe cation contacts are provided by D110, E140, and H143. Residue Y147 is part of the active site. Residues E217, E251, and H254 each contribute to the Fe cation site.

The protein belongs to the ribonucleoside diphosphate reductase small chain family. Heterotetramer composed of a homodimer of the large subunit (R1) and a homodimer of the small subunit (R2). Larger multisubunit protein complex are also active, composed of (R1)n(R2)n. Requires Fe cation as cofactor.

The enzyme catalyses a 2'-deoxyribonucleoside 5'-diphosphate + [thioredoxin]-disulfide + H2O = a ribonucleoside 5'-diphosphate + [thioredoxin]-dithiol. Functionally, ribonucleoside-diphosphate reductase holoenzyme provides the precursors necessary for viral DNA synthesis. Allows virus growth in non-dividing cells. Catalyzes the biosynthesis of deoxyribonucleotides from the corresponding ribonucleotides. The polypeptide is Probable ribonucleoside-diphosphate reductase small subunit 048L (Invertebrate iridescent virus 3 (IIV-3)).